A 257-amino-acid chain; its full sequence is 6-phosphogluconolactonase (257 aa).

A2 is modified (N-acetylalanine). S49 carries the phosphoserine modification. N6-acetyllysine is present on K180.

The protein belongs to the glucosamine/galactosamine-6-phosphate isomerase family. 6-phosphogluconolactonase subfamily.

It localises to the cytoplasm. It carries out the reaction 6-phospho-D-glucono-1,5-lactone + H2O = 6-phospho-D-gluconate + H(+). It functions in the pathway carbohydrate degradation; pentose phosphate pathway; D-ribulose 5-phosphate from D-glucose 6-phosphate (oxidative stage): step 2/3. Hydrolysis of 6-phosphogluconolactone to 6-phosphogluconate. The protein is 6-phosphogluconolactonase of Rattus norvegicus (Rat).